The chain runs to 139 residues: Large ribosomal subunit protein uL16 (139 aa).

The span at 1-17 (MLMPKRVKYRKTQRGRM) shows a compositional bias: basic residues. The disordered stretch occupies residues 1–24 (MLMPKRVKYRKTQRGRMKGNSGRG).

Belongs to the universal ribosomal protein uL16 family. As to quaternary structure, part of the 50S ribosomal subunit.

Its function is as follows. Binds 23S rRNA and is also seen to make contacts with the A and possibly P site tRNAs. The chain is Large ribosomal subunit protein uL16 from Pelodictyon phaeoclathratiforme (strain DSM 5477 / BU-1).